The chain runs to 274 residues: Rhamnulose-1-phosphate aldolase (274 aa).

Residue glutamate 117 is part of the active site. The Zn(2+) site is built by histidine 141, histidine 143, and histidine 212.

It belongs to the aldolase class II family. RhaD subfamily. As to quaternary structure, homotetramer. Requires Zn(2+) as cofactor.

It is found in the cytoplasm. It catalyses the reaction L-rhamnulose 1-phosphate = (S)-lactaldehyde + dihydroxyacetone phosphate. It functions in the pathway carbohydrate degradation; L-rhamnose degradation; glycerone phosphate from L-rhamnose: step 3/3. In terms of biological role, catalyzes the reversible cleavage of L-rhamnulose-1-phosphate to dihydroxyacetone phosphate (DHAP) and L-lactaldehyde. The sequence is that of Rhamnulose-1-phosphate aldolase from Escherichia coli (strain SMS-3-5 / SECEC).